We begin with the raw amino-acid sequence, 1486 residues long: Chromosome partition protein MukB (1486 aa).

34 to 41 provides a ligand contact to ATP; it reads GGNGAGKS. Coiled-coil stretches lie at residues 326–418, 444–480, and 509–603; these read LEAD…QYNQ, LETF…QAYQ, and RHLA…RAPV. A flexible hinge region spans residues 666–783; it reads PGGSEDQRLN…EVPLFGRAAR (118 aa). Coiled-coil stretches lie at residues 835 to 923, 977 to 1115, and 1209 to 1266; these read EAEI…AKLE, EMLS…TAKA, and VEAI…QNVS.

It belongs to the SMC family. MukB subfamily. Homodimerization via its hinge domain. Binds to DNA via its C-terminal region. Interacts, and probably forms a ternary complex, with MukE and MukF via its C-terminal region. The complex formation is stimulated by calcium or magnesium. Interacts with tubulin-related protein FtsZ.

The protein resides in the cytoplasm. Its subcellular location is the nucleoid. Its function is as follows. Plays a central role in chromosome condensation, segregation and cell cycle progression. Functions as a homodimer, which is essential for chromosome partition. Involved in negative DNA supercoiling in vivo, and by this means organize and compact chromosomes. May achieve or facilitate chromosome segregation by condensation DNA from both sides of a centrally located replisome during cell division. The polypeptide is Chromosome partition protein MukB (Escherichia coli O17:K52:H18 (strain UMN026 / ExPEC)).